The primary structure comprises 237 residues: Ubiquinone biosynthesis O-methyltransferase (237 aa).

Residues Arg38, Gly58, Asp79, and Met124 each coordinate S-adenosyl-L-methionine.

This sequence belongs to the methyltransferase superfamily. UbiG/COQ3 family.

The enzyme catalyses a 3-demethylubiquinol + S-adenosyl-L-methionine = a ubiquinol + S-adenosyl-L-homocysteine + H(+). The catalysed reaction is a 3-(all-trans-polyprenyl)benzene-1,2-diol + S-adenosyl-L-methionine = a 2-methoxy-6-(all-trans-polyprenyl)phenol + S-adenosyl-L-homocysteine + H(+). Its pathway is cofactor biosynthesis; ubiquinone biosynthesis. O-methyltransferase that catalyzes the 2 O-methylation steps in the ubiquinone biosynthetic pathway. This chain is Ubiquinone biosynthesis O-methyltransferase, found in Acinetobacter baumannii (strain ACICU).